The primary structure comprises 561 residues: MMASASLLIGSYLLLLMLLARPLGKGLAHLVADRPLHGFATAERGLWRVSGVENQGMRWQRYLLAILLFNAAGLLLLLLILMNQASLPLNPQQMPNLSWDLALNTAVSFITNTDWQAYAGESTLSYFSQMAGLTVQNFLSAATGIAVAFALMRGFVNREQGELGNAWRDITRITLYVLLPLSLLMALFLVSQGTLQNLHGYLDLTTLEGAKQTLPMGPVASQEAIKMLGTNGGGFFNANSAHPFENPTALSNFVQMLAIFLIPAALCFAFGDVVRDRRQGHALLWSMSLMFVAAVVVVMWAEVKGNPHFLTLGADSAANMEGKETRFGILNSSLFAVITTAASCGAVNAMHDSFTALGGMVPMWLMQIGEVVFGGVGSGLYGMLLFVLLAVFIAGLMIGRSPEYLGKKIDVWEMKMTALAILVTPVLVLLGAALAMMTDAGRSAMLNPGTHGFSEVLYALSSAANNNGSAFAGLNANTPFWNMLLAFCMLVGRFGIIVPVLAIAGSLAMKKVQPAGNGTLPTHGTLFIALLIGTVMLVGALTFIPALALGPVAEHLHMSGH.

12 consecutive transmembrane segments (helical) span residues 1–21, 62–82, 132–152, 173–193, 253–273, 283–303, 327–347, 356–376, 379–399, 416–436, 483–503, and 526–546; these read MMASASLLIGSYLLLLMLLAR, YLLAILLFNAAGLLLLLLILM, GLTVQNFLSAATGIAVAFALM, ITLYVLLPLSLLMALFLVSQG, FVQMLAIFLIPAALCFAFGDV, LLWSMSLMFVAAVVVVMWAEV, FGILNSSLFAVITTAASCGAV, ALGGMVPMWLMQIGEVVFGGV, GLYGMLLFVLLAVFIAGLMIG, MTALAILVTPVLVLLGAALAM, MLLAFCMLVGRFGIIVPVLAI, and LFIALLIGTVMLVGALTFIPA.

It belongs to the KdpA family. As to quaternary structure, the system is composed of three essential subunits: KdpA, KdpB and KdpC.

Its subcellular location is the cell inner membrane. Part of the high-affinity ATP-driven potassium transport (or Kdp) system, which catalyzes the hydrolysis of ATP coupled with the electrogenic transport of potassium into the cytoplasm. This subunit binds the periplasmic potassium ions and delivers the ions to the membrane domain of KdpB through an intramembrane tunnel. This Erwinia tasmaniensis (strain DSM 17950 / CFBP 7177 / CIP 109463 / NCPPB 4357 / Et1/99) protein is Potassium-transporting ATPase potassium-binding subunit.